A 440-amino-acid chain; its full sequence is Acetylornithine deacetylase (440 aa).

Histidine 101 is a binding site for Zn(2+). The active site involves aspartate 103. Residue aspartate 133 participates in Zn(2+) binding. The active-site Proton acceptor is glutamate 167. Residues glutamate 168 and histidine 412 each contribute to the Zn(2+) site.

It belongs to the peptidase M20A family. ArgE subfamily. Homodimer. Zn(2+) is required as a cofactor. Co(2+) serves as cofactor.

It carries out the reaction N(2)-acetyl-L-ornithine + H2O = L-ornithine + acetate. The protein operates within amino-acid biosynthesis; L-arginine biosynthesis; L-ornithine from N(2)-acetyl-L-ornithine (linear): step 1/1. The polypeptide is Acetylornithine deacetylase (Arabidopsis thaliana (Mouse-ear cress)).